The primary structure comprises 440 residues: Protein naked cuticle homolog 1 (440 aa).

Residue glycine 2 is the site of N-myristoyl glycine attachment. Residues 129–164 enclose the EF-hand domain; it reads EEDNRQEWTFTLYDFDNNGKVTREDITSLLHTIYEV. 5 residues coordinate Ca(2+): aspartate 142, aspartate 144, asparagine 146, lysine 148, and aspartate 153. The span at 192–204 shows a compositional bias: polar residues; sequence RWKNCTQTNTDTP. Disordered stretches follow at residues 192 to 221, 272 to 379, and 421 to 440; these read RWKNCTQTNTDTPNPKHKGEKCIEDSKTSE, AAPA…QRPK, and RHEHHHHHEHHHHYHHFYQS. The segment covering 211-221 has biased composition (basic and acidic residues); that stretch reads EKCIEDSKTSE. Over residues 272–293 the composition is skewed to low complexity; it reads AAPATEPAKPTHATRSSNQSRS. Over residues 324–336 the composition is skewed to basic residues; the sequence is RHTHALRSPKTHR. The segment covering 352–362 has biased composition (pro residues); it reads APPPPSVPNQT. The span at 422–440 shows a compositional bias: basic residues; the sequence is HEHHHHHEHHHHYHHFYQS.

This sequence belongs to the NKD family.

The protein localises to the cell membrane. Its subcellular location is the cytoplasm. In terms of biological role, cell autonomous antagonist of the canonical Wnt signaling pathway. May activate a second Wnt signaling pathway that controls planar cell polarity. This Danio rerio (Zebrafish) protein is Protein naked cuticle homolog 1 (nkd1).